The primary structure comprises 256 residues: Triosephosphate isomerase (256 aa).

Substrate is bound at residue 12 to 14 (NWK). His99 acts as the Electrophile in catalysis. The active-site Proton acceptor is the Glu169. Substrate contacts are provided by residues Gly175, Ser214, and 235–236 (GG).

It belongs to the triosephosphate isomerase family. Homodimer.

Its subcellular location is the cytoplasm. The enzyme catalyses D-glyceraldehyde 3-phosphate = dihydroxyacetone phosphate. The protein operates within carbohydrate biosynthesis; gluconeogenesis. It functions in the pathway carbohydrate degradation; glycolysis; D-glyceraldehyde 3-phosphate from glycerone phosphate: step 1/1. Functionally, involved in the gluconeogenesis. Catalyzes stereospecifically the conversion of dihydroxyacetone phosphate (DHAP) to D-glyceraldehyde-3-phosphate (G3P). The polypeptide is Triosephosphate isomerase (Rhizobium etli (strain ATCC 51251 / DSM 11541 / JCM 21823 / NBRC 15573 / CFN 42)).